We begin with the raw amino-acid sequence, 83 residues long: RNA-binding protein Hfq (83 aa).

In terms of domain architecture, Sm spans 9-68 (DPFLNALRKERIPVSIYLVNGIKLQGQVESFDQFVILLKNTVSQMVYKHAISTVVPSRAL).

The protein belongs to the Hfq family. Homohexamer.

Its function is as follows. RNA chaperone that binds small regulatory RNA (sRNAs) and mRNAs to facilitate mRNA translational regulation in response to envelope stress, environmental stress and changes in metabolite concentrations. Also binds with high specificity to tRNAs. In Pseudoalteromonas atlantica (strain T6c / ATCC BAA-1087), this protein is RNA-binding protein Hfq.